Here is a 337-residue protein sequence, read N- to C-terminus: Glyceraldehyde-3-phosphate dehydrogenase, cytosolic (337 aa).

NAD(+) is bound by residues 13 to 14 (RI), Asp35, and Arg82. Residues 153-155 (SCT), Thr184, 213-214 (TG), and Arg236 each bind D-glyceraldehyde 3-phosphate. Cys154 (nucleophile) is an active-site residue. Residue Asn318 participates in NAD(+) binding.

Belongs to the glyceraldehyde-3-phosphate dehydrogenase family. Homotetramer.

The protein resides in the cytoplasm. It carries out the reaction D-glyceraldehyde 3-phosphate + phosphate + NAD(+) = (2R)-3-phospho-glyceroyl phosphate + NADH + H(+). Its pathway is carbohydrate degradation; glycolysis; pyruvate from D-glyceraldehyde 3-phosphate: step 1/5. Functionally, key enzyme in glycolysis that catalyzes the first step of the pathway by converting D-glyceraldehyde 3-phosphate (G3P) into 3-phospho-D-glyceroyl phosphate. Essential for the maintenance of cellular ATP levels and carbohydrate metabolism. This chain is Glyceraldehyde-3-phosphate dehydrogenase, cytosolic (GAPC), found in Craterostigma plantagineum (Blue gem).